The chain runs to 583 residues: Eukaryotic translation initiation factor 3 subunit D (583 aa).

Residues Gly116–Gly150 form a disordered region. A compositionally biased stretch (basic and acidic residues) spans Gln140 to Gly149. Residues Ser298–Pro312 form an RNA gate region. The tract at residues Asn561 to Glu583 is disordered. Positions Phe563 to Glu583 are enriched in acidic residues.

Belongs to the eIF-3 subunit D family. Component of the eukaryotic translation initiation factor 3 (eIF-3) complex.

It is found in the cytoplasm. Its function is as follows. mRNA cap-binding component of the eukaryotic translation initiation factor 3 (eIF-3) complex, which is involved in protein synthesis of a specialized repertoire of mRNAs and, together with other initiation factors, stimulates binding of mRNA and methionyl-tRNAi to the 40S ribosome. The eIF-3 complex specifically targets and initiates translation of a subset of mRNAs involved in cell proliferation. In the eIF-3 complex, eif3d specifically recognizes and binds the 7-methylguanosine cap of a subset of mRNAs. The protein is Eukaryotic translation initiation factor 3 subunit D of Aspergillus oryzae (strain ATCC 42149 / RIB 40) (Yellow koji mold).